A 353-amino-acid chain; its full sequence is MIEEIQKLNGFIVIDKPQGPTSHQVDYWVRQILGTEKVGHIGTLDPNVTGVLVMAIGKAVRLIDVVHEKPKEYVGVMRFHSDISEEEVREVFRKFTTRIYQLPPVRSAVSRKVRIKTIYELDMIEKKDKIVLFHVKCESGTYIRTLCTDIGYVSGKGGQMVDLRRISTGPFKEDIAITLQDLQAYVDLAKEGKDELFRSHFLDMTYAFIDYPKIVAKKSAVENIAHGSDLYVGGVKLIDGNFQKGDRVCVLSEDNELLGTGIARCDSSNLFMKVVDFDHIFVEAKHGKGDVVRDREKDVQRPGQQVHRNIRDAAHGPDSRTGRGRKETGPQIAPNRVRKLQNKTGVHRRPGSH.

Catalysis depends on aspartate 45, which acts as the Nucleophile. Positions 211–287 (YPKIVAKKSA…DHIFVEAKHG (77 aa)) constitute a PUA domain. A disordered region spans residues 292-353 (VRDREKDVQR…TGVHRRPGSH (62 aa)). The span at 309–328 (NIRDAAHGPDSRTGRGRKET) shows a compositional bias: basic and acidic residues. Residues 336–353 (RVRKLQNKTGVHRRPGSH) are compositionally biased toward basic residues.

This sequence belongs to the pseudouridine synthase TruB family. Type 2 subfamily.

It catalyses the reaction uridine(55) in tRNA = pseudouridine(55) in tRNA. Functionally, could be responsible for synthesis of pseudouridine from uracil-55 in the psi GC loop of transfer RNAs. This Thermoplasma volcanium (strain ATCC 51530 / DSM 4299 / JCM 9571 / NBRC 15438 / GSS1) protein is Probable tRNA pseudouridine synthase B.